The following is a 101-amino-acid chain: MAKKSSIEKNNRRKRMTGNAAAKRARLKTIIADKTKPMEERFAATLKLAEMPRNSSATRIRNRCELTGRPRSNYRKTKLSRIALRDLGSRGLVPGLVKSSW.

The span at 1 to 10 (MAKKSSIEKN) shows a compositional bias: basic and acidic residues. The tract at residues 1-23 (MAKKSSIEKNNRRKRMTGNAAAK) is disordered.

This sequence belongs to the universal ribosomal protein uS14 family. Part of the 30S ribosomal subunit. Contacts proteins S3 and S10.

Binds 16S rRNA, required for the assembly of 30S particles and may also be responsible for determining the conformation of the 16S rRNA at the A site. In Nitrobacter hamburgensis (strain DSM 10229 / NCIMB 13809 / X14), this protein is Small ribosomal subunit protein uS14.